Consider the following 223-residue polypeptide: UPF0758 protein Cvib_1178 (223 aa).

The 123-residue stretch at 100–222 (KIQGARDVYE…WYSFRENNQL (123 aa)) folds into the MPN domain. Residues H171, H173, and D184 each coordinate Zn(2+). A JAMM motif motif is present at residues 171 to 184 (HNHPSGDTEPSNAD).

It belongs to the UPF0758 family.

This is UPF0758 protein Cvib_1178 from Chlorobium phaeovibrioides (strain DSM 265 / 1930) (Prosthecochloris vibrioformis (strain DSM 265)).